Here is a 97-residue protein sequence, read N- to C-terminus: ATP-dependent Clp protease adapter protein ClpS (97 aa).

Belongs to the ClpS family. As to quaternary structure, binds to the N-terminal domain of the chaperone ClpA.

Involved in the modulation of the specificity of the ClpAP-mediated ATP-dependent protein degradation. The protein is ATP-dependent Clp protease adapter protein ClpS of Nostoc sp. (strain PCC 7120 / SAG 25.82 / UTEX 2576).